We begin with the raw amino-acid sequence, 188 residues long: Peptide methionine sulfoxide reductase MsrA (188 aa).

The segment at 1–25 is disordered; that stretch reads MEGNEKAEQKNATSEESTDIFENPG. C37 is an active-site residue.

Belongs to the MsrA Met sulfoxide reductase family.

It catalyses the reaction L-methionyl-[protein] + [thioredoxin]-disulfide + H2O = L-methionyl-(S)-S-oxide-[protein] + [thioredoxin]-dithiol. It carries out the reaction [thioredoxin]-disulfide + L-methionine + H2O = L-methionine (S)-S-oxide + [thioredoxin]-dithiol. Functionally, has an important function as a repair enzyme for proteins that have been inactivated by oxidation. Catalyzes the reversible oxidation-reduction of methionine sulfoxide in proteins to methionine. This Methanosarcina acetivorans (strain ATCC 35395 / DSM 2834 / JCM 12185 / C2A) protein is Peptide methionine sulfoxide reductase MsrA.